We begin with the raw amino-acid sequence, 151 residues long: Large ribosomal subunit protein uL13 (151 aa).

It belongs to the universal ribosomal protein uL13 family. As to quaternary structure, part of the 50S ribosomal subunit.

This protein is one of the early assembly proteins of the 50S ribosomal subunit, although it is not seen to bind rRNA by itself. It is important during the early stages of 50S assembly. The sequence is that of Large ribosomal subunit protein uL13 from Microcystis aeruginosa (strain NIES-843 / IAM M-2473).